Consider the following 378-residue polypeptide: Queuine tRNA-ribosyltransferase (378 aa).

Asp89 serves as the catalytic Proton acceptor. Substrate-binding positions include 89 to 93 (DSGGF), Asp143, Gln187, and Gly214. Positions 245–251 (GVGKPQD) are RNA binding. The Nucleophile role is filled by Asp264. The tract at residues 269–273 (TRNAR) is RNA binding; important for wobble base 34 recognition. Positions 302, 304, 307, and 334 each coordinate Zn(2+).

It belongs to the queuine tRNA-ribosyltransferase family. Homodimer. Within each dimer, one monomer is responsible for RNA recognition and catalysis, while the other monomer binds to the replacement base PreQ1. The cofactor is Zn(2+).

It catalyses the reaction 7-aminomethyl-7-carbaguanine + guanosine(34) in tRNA = 7-aminomethyl-7-carbaguanosine(34) in tRNA + guanine. It functions in the pathway tRNA modification; tRNA-queuosine biosynthesis. Its function is as follows. Catalyzes the base-exchange of a guanine (G) residue with the queuine precursor 7-aminomethyl-7-deazaguanine (PreQ1) at position 34 (anticodon wobble position) in tRNAs with GU(N) anticodons (tRNA-Asp, -Asn, -His and -Tyr). Catalysis occurs through a double-displacement mechanism. The nucleophile active site attacks the C1' of nucleotide 34 to detach the guanine base from the RNA, forming a covalent enzyme-RNA intermediate. The proton acceptor active site deprotonates the incoming PreQ1, allowing a nucleophilic attack on the C1' of the ribose to form the product. After dissociation, two additional enzymatic reactions on the tRNA convert PreQ1 to queuine (Q), resulting in the hypermodified nucleoside queuosine (7-(((4,5-cis-dihydroxy-2-cyclopenten-1-yl)amino)methyl)-7-deazaguanosine). The chain is Queuine tRNA-ribosyltransferase from Blochmanniella floridana.